Here is a 344-residue protein sequence, read N- to C-terminus: Protein-glutamate methylesterase/protein-glutamine glutaminase 1 (344 aa).

A Response regulatory domain is found at 5–122 (RVLVVDDSAT…GTQEALAEIV (118 aa)). At Asp56 the chain carries 4-aspartylphosphate. The 193-residue stretch at 151 to 343 (FMPSGDIVAI…QSILDLASAR (193 aa)) folds into the CheB-type methylesterase domain. Catalysis depends on residues Ser163, His189, and Asp285.

The protein belongs to the CheB family. In terms of processing, phosphorylated by CheA. Phosphorylation of the N-terminal regulatory domain activates the methylesterase activity.

The protein resides in the cytoplasm. The catalysed reaction is [protein]-L-glutamate 5-O-methyl ester + H2O = L-glutamyl-[protein] + methanol + H(+). It carries out the reaction L-glutaminyl-[protein] + H2O = L-glutamyl-[protein] + NH4(+). Its function is as follows. Involved in chemotaxis. Part of a chemotaxis signal transduction system that modulates chemotaxis in response to various stimuli. Catalyzes the demethylation of specific methylglutamate residues introduced into the chemoreceptors (methyl-accepting chemotaxis proteins or MCP) by CheR. Also mediates the irreversible deamidation of specific glutamine residues to glutamic acid. This Caulobacter vibrioides (strain ATCC 19089 / CIP 103742 / CB 15) (Caulobacter crescentus) protein is Protein-glutamate methylesterase/protein-glutamine glutaminase 1.